Reading from the N-terminus, the 23-residue chain is GLGSVLGKILKMGANLLGGAPKQ.

Expressed by the skin glands.

The protein localises to the secreted. Functionally, antimicrobial peptide. The polypeptide is Caerulein precursor fragment R6 (Xenopus ruwenzoriensis (Uganda clawed frog)).